Here is a 192-residue protein sequence, read N- to C-terminus: Peptidyl-prolyl cis-trans isomerase 1 (192 aa).

The PPIase cyclophilin-type domain maps to 25-188 (FFDVSIGEEP…KTVTIADCGE (164 aa)).

This sequence belongs to the cyclophilin-type PPIase family.

The catalysed reaction is [protein]-peptidylproline (omega=180) = [protein]-peptidylproline (omega=0). Functionally, PPIases accelerate the folding of proteins. It catalyzes the cis-trans isomerization of proline imidic peptide bonds in oligopeptides. This chain is Peptidyl-prolyl cis-trans isomerase 1 (cyn-1), found in Caenorhabditis elegans.